Consider the following 189-residue polypeptide: Proline-rich protein 29 (189 aa).

Positions 152–189 (SREREVRAVPPPPPPSATGTVGADVPPASDYYDAESLL) are disordered.

In Homo sapiens (Human), this protein is Proline-rich protein 29 (PRR29).